The primary structure comprises 392 residues: uncharacterized protein (392 aa).

Positions 1 to 19 (MRRIVCPPVLFLSASLLTG) are cleaved as a signal peptide. Residue C20 is the site of N-palmitoyl cysteine attachment. A lipid anchor (S-diacylglycerol cysteine) is attached at C20. Residues 148–173 (SSGSSGGGGGGSGSSSDGGIKNGSDE) are disordered. Gly residues predominate over residues 151–160 (SSGGGGGGSG).

Belongs to the TP013X lipoprotein family.

Its subcellular location is the cell membrane. This is an uncharacterized protein from Treponema pallidum (strain Nichols).